A 195-amino-acid chain; its full sequence is uncharacterized protein (195 aa).

The first 17 residues, 1-17 (MKASLITAFVLPLLALA), serve as a signal peptide directing secretion. Residue asparagine 75 is glycosylated (N-linked (GlcNAc...) asparagine).

It localises to the secreted. This is an uncharacterized protein from Arthroderma benhamiae (strain ATCC MYA-4681 / CBS 112371) (Trichophyton mentagrophytes).